We begin with the raw amino-acid sequence, 1066 residues long: DNA-directed RNA polymerase subunit beta (1066 aa).

The protein belongs to the RNA polymerase beta chain family. In terms of assembly, in plastids the minimal PEP RNA polymerase catalytic core is composed of four subunits: alpha, beta, beta', and beta''. When a (nuclear-encoded) sigma factor is associated with the core the holoenzyme is formed, which can initiate transcription.

It localises to the plastid. The protein localises to the chloroplast. It catalyses the reaction RNA(n) + a ribonucleoside 5'-triphosphate = RNA(n+1) + diphosphate. Functionally, DNA-dependent RNA polymerase catalyzes the transcription of DNA into RNA using the four ribonucleoside triphosphates as substrates. This is DNA-directed RNA polymerase subunit beta from Psilotum nudum (Whisk fern).